A 534-amino-acid polypeptide reads, in one-letter code: CTP synthase (534 aa).

The interval 1-267 (MTKYIFVTGG…DQIVCDHLKL (267 aa)) is amidoligase domain. A CTP-binding site is contributed by S13. S13 is a binding site for UTP. 14–19 (SIGKGI) is a binding site for ATP. Y54 is an L-glutamine binding site. Residue D71 coordinates ATP. D71 and E141 together coordinate Mg(2+). CTP is bound by residues 148–150 (DIE), 188–193 (KTKPTQ), and K224. UTP is bound by residues 188–193 (KTKPTQ) and K224. Residues 292–534 (KIALVGKYVE…FVTAAVENMK (243 aa)) form the Glutamine amidotransferase type-1 domain. Residue G354 coordinates L-glutamine. C381 functions as the Nucleophile; for glutamine hydrolysis in the catalytic mechanism. L-glutamine is bound by residues 382–385 (LGMQ), E405, and R463. Residues H508 and E510 contribute to the active site.

It belongs to the CTP synthase family. Homotetramer.

The catalysed reaction is UTP + L-glutamine + ATP + H2O = CTP + L-glutamate + ADP + phosphate + 2 H(+). It carries out the reaction L-glutamine + H2O = L-glutamate + NH4(+). It catalyses the reaction UTP + NH4(+) + ATP = CTP + ADP + phosphate + 2 H(+). It participates in pyrimidine metabolism; CTP biosynthesis via de novo pathway; CTP from UDP: step 2/2. Allosterically activated by GTP, when glutamine is the substrate; GTP has no effect on the reaction when ammonia is the substrate. The allosteric effector GTP functions by stabilizing the protein conformation that binds the tetrahedral intermediate(s) formed during glutamine hydrolysis. Inhibited by the product CTP, via allosteric rather than competitive inhibition. Functionally, catalyzes the ATP-dependent amination of UTP to CTP with either L-glutamine or ammonia as the source of nitrogen. Regulates intracellular CTP levels through interactions with the four ribonucleotide triphosphates. This Streptococcus agalactiae serotype V (strain ATCC BAA-611 / 2603 V/R) protein is CTP synthase.